A 355-amino-acid chain; its full sequence is MTLPLDLLDMPFARLGDRLGNPLRLLMVHAHPDDETTTTGATAALYAAETIDVYLVTCTRGERGEILDPEAQRVVDDAADGEQALGELRVRELAGAVTMLGIKGSRFLGGAGRWWDSGMAGEESNTDPRSLVAGDFQEQVDALAAAIREIRPQVLVTYDSRGGYGHPDHIRAHQLSLAAVDRAAETGGESESGGEGGGEGAEAWSVAKVYAAVVPFSILRSVARRLGSNGDSPFAPLAEALANGVPEDLIEIPYGVPDHLVTAQIDARDWLDAKTAAMRSHRSQMAADSWFFKLAASSDGGFGIEHFQLLRGTAGPLDDGFEADLFAGVRAVDDSDCEPDFGWLPEEEPAGGELF.

Zn(2+) contacts are provided by histidine 31, aspartate 34, and histidine 169.

Belongs to the MshB deacetylase family. The cofactor is Zn(2+).

The catalysed reaction is 1D-myo-inositol 2-acetamido-2-deoxy-alpha-D-glucopyranoside + H2O = 1D-myo-inositol 2-amino-2-deoxy-alpha-D-glucopyranoside + acetate. Functionally, catalyzes the deacetylation of 1D-myo-inositol 2-acetamido-2-deoxy-alpha-D-glucopyranoside (GlcNAc-Ins) in the mycothiol biosynthesis pathway. The sequence is that of 1D-myo-inositol 2-acetamido-2-deoxy-alpha-D-glucopyranoside deacetylase 3 from Catenulispora acidiphila (strain DSM 44928 / JCM 14897 / NBRC 102108 / NRRL B-24433 / ID139908).